The chain runs to 106 residues: ATP-dependent Clp protease adapter protein ClpS (106 aa).

It belongs to the ClpS family. As to quaternary structure, binds to the N-terminal domain of the chaperone ClpA.

In terms of biological role, involved in the modulation of the specificity of the ClpAP-mediated ATP-dependent protein degradation. The chain is ATP-dependent Clp protease adapter protein ClpS from Aliivibrio fischeri (strain ATCC 700601 / ES114) (Vibrio fischeri).